Here is a 107-residue protein sequence, read N- to C-terminus: Large ribosomal subunit protein uL24 (107 aa).

It belongs to the universal ribosomal protein uL24 family. In terms of assembly, part of the 50S ribosomal subunit.

Its function is as follows. One of two assembly initiator proteins, it binds directly to the 5'-end of the 23S rRNA, where it nucleates assembly of the 50S subunit. Functionally, one of the proteins that surrounds the polypeptide exit tunnel on the outside of the subunit. The chain is Large ribosomal subunit protein uL24 from Carboxydothermus hydrogenoformans (strain ATCC BAA-161 / DSM 6008 / Z-2901).